The sequence spans 153 residues: Transcriptional repressor NrdR (153 aa).

A zinc finger spans residues 3 to 34 (CPFCNSTDTQVKDSRSIENDMLIRRRRVCLVC). The ATP-cone domain occupies 49–139 (FMVVKKNGET…VYMNFRNIND (91 aa)).

This sequence belongs to the NrdR family. Zn(2+) serves as cofactor.

In terms of biological role, negatively regulates transcription of bacterial ribonucleotide reductase nrd genes and operons by binding to NrdR-boxes. This Ehrlichia chaffeensis (strain ATCC CRL-10679 / Arkansas) protein is Transcriptional repressor NrdR.